The primary structure comprises 152 residues: SKP1-like protein 11 (152 aa).

Residues Ile-94–Glu-152 are interaction with the F-box domain of F-box proteins.

The protein belongs to the SKP1 family. Part of a SCF (SKP1-cullin-F-box) protein ligase complex. Interacts with ADO3/FKF1, COI1/FBL2, EBF1/FBL6, PP2A13, PP2B10, UFO, SKIP2, SKIP15, SKIP16, SKIP32, CPR1/CPR30, At1g55000, At1g67340, At1g78100, At3g04660, At3g16740, At3g61590, At4g38940 and At5g49610. In terms of tissue distribution, expressed in young seedlings, cotyledons, roots, leaves, floral stems, inflorescences, pollen, and siliques, with a slightly higher level in inflorescence than in other tissues.

The protein resides in the nucleus. It participates in protein modification; protein ubiquitination. In terms of biological role, involved in ubiquitination and subsequent proteasomal degradation of target proteins. Together with CUL1, RBX1 and a F-box protein, it forms a SCF E3 ubiquitin ligase complex. The functional specificity of this complex depends on the type of F-box protein. In the SCF complex, it serves as an adapter that links the F-box protein to CUL1. Plays a role during early flowers reproductive development. This is SKP1-like protein 11 (ASK11) from Arabidopsis thaliana (Mouse-ear cress).